Here is a 293-residue protein sequence, read N- to C-terminus: Heterogeneous nuclear ribonucleoprotein C-like 4 (293 aa).

The RRM domain maps to 16–87 (SRVFIGNLNT…QVVDINLAAE (72 aa)). 2 disordered regions span residues 140–177 (VVPS…KLKG) and 208–293 (HCKQ…QDDS). Positions 177–208 (GDDLQAIKQELTQIKQKVDSLLENLEKIEKEH) form a coiled coil. Composition is skewed to basic and acidic residues over residues 208–222 (HCKQ…KSEE) and 229–240 (SKKDKTHVKMES). Residues 242-263 (GGADDSVEEGDLLCDDDNEDQG) show a composition bias toward acidic residues. Over residues 269-293 (LIKDDEKGAEEGEDDRDRANGQDDS) the composition is skewed to basic and acidic residues.

It belongs to the RRM HNRPC family. RALY subfamily.

The protein localises to the nucleus. This is Heterogeneous nuclear ribonucleoprotein C-like 4 from Homo sapiens (Human).